The sequence spans 320 residues: ATP-dependent 6-phosphofructokinase (320 aa).

Glycine 12 provides a ligand contact to ATP. ADP contacts are provided by residues 22-26 and 55-60; these read RGVVR and RYSVSD. ATP-binding positions include 73-74 and 103-106; these read RF and GDGS. Aspartate 104 contacts Mg(2+). A substrate-binding site is contributed by 126–128; the sequence is TID. Aspartate 128 (proton acceptor) is an active-site residue. Arginine 155 provides a ligand contact to ADP. Substrate is bound by residues arginine 163 and 170–172; that span reads MGR. Residues 186-188, lysine 212, and 214-216 contribute to the ADP site; these read GCE and KKH. Residues glutamate 223, arginine 244, and 250–253 contribute to the substrate site; that span reads HIQR.

Belongs to the phosphofructokinase type A (PFKA) family. ATP-dependent PFK group I subfamily. Prokaryotic clade 'B1' sub-subfamily. Homotetramer. Mg(2+) serves as cofactor.

It is found in the cytoplasm. It carries out the reaction beta-D-fructose 6-phosphate + ATP = beta-D-fructose 1,6-bisphosphate + ADP + H(+). The protein operates within carbohydrate degradation; glycolysis; D-glyceraldehyde 3-phosphate and glycerone phosphate from D-glucose: step 3/4. Its activity is regulated as follows. Allosterically activated by ADP and other diphosphonucleosides, and allosterically inhibited by phosphoenolpyruvate. Functionally, catalyzes the phosphorylation of D-fructose 6-phosphate to fructose 1,6-bisphosphate by ATP, the first committing step of glycolysis. This Pectobacterium carotovorum subsp. carotovorum (strain PC1) protein is ATP-dependent 6-phosphofructokinase.